A 2359-amino-acid chain; its full sequence is Low-reducing polyketide synthase drtA (2359 aa).

Residues 17–444 (LPPIAVVSFA…GANAHVIVEE (428 aa)) enclose the Ketosynthase family 3 (KS3) domain. Active-site for beta-ketoacyl synthase activity residues include Cys-190, His-327, and His-367. The malonyl-CoA:ACP transacylase (MAT) domain stretch occupies residues 556–868 (VFTGQGSQWP…QYLAALDRGK (313 aa)). Ser-648 acts as the For malonyltransferase activity in catalysis. An N-terminal hotdog fold region spans residues 940–1077 (HELLGRKILG…GRISVRQVAA (138 aa)). The interval 940 to 1245 (HELLGRKILG…FKGLRFSELN (306 aa)) is dehydratase (DH) domain. The PKS/mFAS DH domain maps to 940–1250 (HELLGRKILG…FSELNMGDGV (311 aa)). The active-site Proton acceptor; for dehydratase activity is the His-972. The segment at 1089–1250 (AYSESAEHWY…FSELNMGDGV (162 aa)) is C-terminal hotdog fold. Asp-1153 serves as the catalytic Proton donor; for dehydratase activity. Positions 1659-1970 (GSFDSLELYE…TGRHVGKVVV (312 aa)) are enoyl reductase (ER) domain. Residues 1995-2172 (SYLITGGLHG…LSLDIGAVQD (178 aa)) are ketoreductase (KR) domain. A Carrier domain is found at 2280–2356 (ALTEAAIELF…ALCSKLITRL (77 aa)). Ser-2316 bears the O-(pantetheine 4'-phosphoryl)serine mark.

Its pathway is secondary metabolite biosynthesis; terpenoid biosynthesis. Its function is as follows. Low-reducing polyketide synthase; part of the gene cluster that mediates the biosynthesis of various drimane-type sesquiterpene esters, compounds that exhibit diverse biological activities and are widely present in eukaryotes. The pathway begins with the synthesis of the backbone drimenol by the terpene cyclase drtB using farnesyl pyrophosphate (FPP) as substrate. The cytochrome P450 monooxygenase drtD is then responsible for the hydroxylations at C-6, C-9 and C-12, as well as the oxidation of hydroxyl groups at C-6 and C-11 to a ketone and an aldehyde, respectively. Then, the biosynthesis can go in two directions, either the hydroxylated drimenol is further hydroxylated at C-2 and C-3 by an enzyme(s) not associated with the drt cluster, or the FAD-binding oxidoreductase drtC further oxidizes C-11 or C-12 to form the butyrolactone ring. DrtB, drtD and drtC are solely responsible for the formation of the different drimane structures observed during drimane sesquiterpenes biosynthesis. The polyketide synthase drtA synthesizes different lengths (C6 and C8) of PKS chains, which are then oxidized to varying degrees by the short-chain dehydrogenase drtF. Finally, these PKS chains are transferred onto drimane sesquiterpenes by the acyltransferase drtE, forming the sesquiterpene esters. In addition to the different fatty acyl-CoA chains produced by drtA, drtE is also able to use cinnamoyl-CoA as a substrate. In Aspergillus calidoustus, this protein is Low-reducing polyketide synthase drtA.